The following is a 164-amino-acid chain: Protein-export protein SecB (164 aa).

Belongs to the SecB family. Homotetramer, a dimer of dimers. One homotetramer interacts with 1 SecA dimer.

Its subcellular location is the cytoplasm. One of the proteins required for the normal export of preproteins out of the cell cytoplasm. It is a molecular chaperone that binds to a subset of precursor proteins, maintaining them in a translocation-competent state. It also specifically binds to its receptor SecA. The polypeptide is Protein-export protein SecB (Orientia tsutsugamushi (strain Ikeda) (Rickettsia tsutsugamushi)).